Here is a 213-residue protein sequence, read N- to C-terminus: A-type ATP synthase subunit D (213 aa).

It belongs to the V-ATPase D subunit family. In terms of assembly, has multiple subunits with at least A(3), B(3), C, D, E, F, H, I and proteolipid K(x).

It is found in the cell membrane. Its function is as follows. Component of the A-type ATP synthase that produces ATP from ADP in the presence of a proton gradient across the membrane. The polypeptide is A-type ATP synthase subunit D (Saccharolobus islandicus (strain Y.N.15.51 / Yellowstone #2) (Sulfolobus islandicus)).